The sequence spans 391 residues: Chalcone synthase (391 aa).

Cys164 is a catalytic residue.

The protein belongs to the thiolase-like superfamily. Chalcone/stilbene synthases family.

The enzyme catalyses (E)-4-coumaroyl-CoA + 3 malonyl-CoA + 3 H(+) = 2',4,4',6'-tetrahydroxychalcone + 3 CO2 + 4 CoA. Its pathway is secondary metabolite biosynthesis; flavonoid biosynthesis. In terms of biological role, the primary product of this enzyme is 4,2',4',6'-tetrahydroxychalcone (also termed naringenin-chalcone or chalcone) which can under specific conditions spontaneously isomerize into naringenin. In Dianthus caryophyllus (Carnation), this protein is Chalcone synthase (CHS).